The chain runs to 357 residues: Quinolinate synthase (357 aa).

Iminosuccinate contacts are provided by His-50 and Ser-71. [4Fe-4S] cluster is bound at residue Cys-116. Iminosuccinate is bound by residues 142–144 (YAN) and Ser-159. Cys-203 is a [4Fe-4S] cluster binding site. Residues 229–231 (HPE) and Thr-246 contribute to the iminosuccinate site. Cys-300 lines the [4Fe-4S] cluster pocket.

This sequence belongs to the quinolinate synthase family. Type 1 subfamily. [4Fe-4S] cluster is required as a cofactor.

The protein resides in the cytoplasm. It catalyses the reaction iminosuccinate + dihydroxyacetone phosphate = quinolinate + phosphate + 2 H2O + H(+). Its pathway is cofactor biosynthesis; NAD(+) biosynthesis; quinolinate from iminoaspartate: step 1/1. Its function is as follows. Catalyzes the condensation of iminoaspartate with dihydroxyacetone phosphate to form quinolinate. The sequence is that of Quinolinate synthase from Shewanella oneidensis (strain ATCC 700550 / JCM 31522 / CIP 106686 / LMG 19005 / NCIMB 14063 / MR-1).